A 165-amino-acid chain; its full sequence is Thiol peroxidase (165 aa).

Residues 18-165 (PQVGDVVTDF…PNYDAALAVL (148 aa)) enclose the Thioredoxin domain. The active-site Cysteine sulfenic acid (-SOH) intermediate is cysteine 60. Cysteines 60 and 94 form a disulfide.

The protein belongs to the peroxiredoxin family. Tpx subfamily. In terms of assembly, homodimer.

The catalysed reaction is a hydroperoxide + [thioredoxin]-dithiol = an alcohol + [thioredoxin]-disulfide + H2O. Its function is as follows. Thiol-specific peroxidase that catalyzes the reduction of hydrogen peroxide and organic hydroperoxides to water and alcohols, respectively. Plays a role in cell protection against oxidative stress by detoxifying peroxides. In Pasteurella multocida (strain Pm70), this protein is Thiol peroxidase.